We begin with the raw amino-acid sequence, 2359 residues long: Pre-mRNA-processing-splicing factor 8B (2359 aa).

Residues 1-50 form a disordered region; the sequence is MWNIDGTSLAPPGTDGSRMQTPSHPADHPSYTAPSNRNTPTVPTPEDAEA. Positions 32 to 41 are enriched in polar residues; the sequence is TAPSNRNTPT. Residues 2129-2260 form the MPN domain; sequence TYIMPKNILK…LTSYKLTQAG (132 aa).

The protein resides in the nucleus. Functions as a scaffold that mediates the ordered assembly of spliceosomal proteins and snRNAs. Required for the assembly of the U4/U6-U5 tri-snRNP complex. This Arabidopsis thaliana (Mouse-ear cress) protein is Pre-mRNA-processing-splicing factor 8B.